The primary structure comprises 327 residues: Regulatory protein MsrR (327 aa).

Basic and acidic residues predominate over residues 1–18 (MDKETNDNEYRRQSEHRT). The segment at 1-24 (MDKETNDNEYRRQSEHRTSAPKRK) is disordered. At 1 to 31 (MDKETNDNEYRRQSEHRTSAPKRKKKKKIRK) the chain is on the cytoplasmic side. A helical; Signal-anchor for type II membrane protein transmembrane segment spans residues 32-52 (LPIILLIVVILLIALVVYIVH). At 53–327 (SYNSGVEYAK…QAIKDFLDED (275 aa)) the chain is on the extracellular side.

It belongs to the LytR/CpsA/Psr (LCP) family.

The protein localises to the cell membrane. In terms of biological role, involved in SarA attenuation. Affects resistance to oxacillin and teicoplanin, as well as the synthesis of virulence factors. In Staphylococcus aureus (strain NCTC 8325 / PS 47), this protein is Regulatory protein MsrR (msrR).